The chain runs to 607 residues: MGERNLDGTVSVKATINKYGQKATRSVIKSSVAEDLHKSGRELGIYRESRRVAESAKAKAEVELCKAKKIVKELTLRIEESNRRLKSRRIDIEAVMNESRIDGNGGYVRIMRELEDMKQELSKLKLDVVYVSREKVVAEKEVMELESRMEENLKLLESLKLEVDVANEEHVLVEVAKIEALKECKEVEEQREKERKEVSESLHKRKKRIREMIREIERSKNFENELAETLLDIEMLETQLKLVKEMERKVQRNESMSRSKNRAFERGKDNLSVLKEVTEATEAKKAELASINAELFCLVNTMDTLRKEFDHAKKETAWLDKMIQKDDVMLERLNTKLLIAKDQLEAVSKAEERISYLADNLTTSFEKLKSDREAAKKEELKLREEARIINNEIQKTETGFDGKEKELLSKLDELEKAKHAESLALEKLETMVEKTMETREMESRRNSTITISRFEYEYLSGKACHAEETAEKKVEAAMAWVEALKASTKAIMIKTESLKRVSGKTMLEEERESFRMQRSLSIKRLVQDEIQKFKGNSEDNGLINSPKPVRKSVRLSGKFAPVQGGKSRRYSSGNRATPTFFVIKKKKKVPNMVKFFSRKRRNSSLEQ.

Coiled coils occupy residues 66–295 (KAKK…NAEL) and 329–445 (MLER…ESRR).

It belongs to the WEB family. Interacts with WEB1. Ubiquitous but preferentially in chloroplast-containing tissues.

It localises to the cytoplasm. Required for the chloroplast avoidance response under high intensity blue light. This avoidance response consists in the relocation of chloroplasts on the anticlinal side of exposed cells. Acts in association with WEB1 to maintain the velocity of chloroplast photorelocation movement via cp-actin filaments regulation. The polypeptide is Protein PLASTID MOVEMENT IMPAIRED 2 (PMI2) (Arabidopsis thaliana (Mouse-ear cress)).